The sequence spans 152 residues: D-aminoacyl-tRNA deacylase (152 aa).

A Gly-cisPro motif, important for rejection of L-amino acids motif is present at residues 137–138; it reads GP.

Belongs to the DTD family. Homodimer.

The protein resides in the cytoplasm. The catalysed reaction is glycyl-tRNA(Ala) + H2O = tRNA(Ala) + glycine + H(+). It catalyses the reaction a D-aminoacyl-tRNA + H2O = a tRNA + a D-alpha-amino acid + H(+). In terms of biological role, an aminoacyl-tRNA editing enzyme that deacylates mischarged D-aminoacyl-tRNAs. Also deacylates mischarged glycyl-tRNA(Ala), protecting cells against glycine mischarging by AlaRS. Acts via tRNA-based rather than protein-based catalysis; rejects L-amino acids rather than detecting D-amino acids in the active site. By recycling D-aminoacyl-tRNA to D-amino acids and free tRNA molecules, this enzyme counteracts the toxicity associated with the formation of D-aminoacyl-tRNA entities in vivo and helps enforce protein L-homochirality. The chain is D-aminoacyl-tRNA deacylase from Thermus aquaticus.